Consider the following 351-residue polypeptide: MLKINVKKQLGQLALEANLQIPARGVTALFGLSGSGKTSLINLVSGLVHPDEGYISLNERVLVDQSKAVCIPAYQRHIGYVFQDARLFPHYTVKGNLCYGIKKIDLAKFDDIVSLLGIGHLLKRYPITLSGGEKQRVAIGRALLTQPEILLMDEPLSALDLPRKRELMSYLETLSKKIDIPILYVTHSIEELLRLAEYVVLLDEGKVRAFDRLESIWENPLFLPWKLEDEQSAVLSLPILHNNTGYQVTALGLQQQQIWIKAQQAEVGENIRICIKGSDVSLSLTQPEKTSIRNILHGKVKRIVERENRVDVQIEIDEKPIWATISKWALEDLALQLGQPVFAQIKAVSVL.

The ABC transporter domain occupies 1–229 (MLKINVKKQL…PLFLPWKLED (229 aa)). 31–38 (GLSGSGKT) contributes to the ATP binding site. The Mop domain occupies 289–351 (KTSIRNILHG…FAQIKAVSVL (63 aa)).

This sequence belongs to the ABC transporter superfamily. Molybdate importer (TC 3.A.1.8) family. As to quaternary structure, the complex is composed of two ATP-binding proteins (ModC), two transmembrane proteins (ModB) and a solute-binding protein (ModA).

It localises to the cell inner membrane. It catalyses the reaction molybdate(out) + ATP + H2O = molybdate(in) + ADP + phosphate + H(+). In terms of biological role, part of the ABC transporter complex ModABC involved in molybdenum import. Responsible for energy coupling to the transport system. The sequence is that of Molybdenum import ATP-binding protein ModC from Pasteurella multocida (strain Pm70).